The following is a 275-amino-acid chain: Formamidopyrimidine-DNA glycosylase (275 aa).

Catalysis depends on Pro2, which acts as the Schiff-base intermediate with DNA. The active-site Proton donor is the Glu3. Residue Lys58 is the Proton donor; for beta-elimination activity of the active site. His93, Arg111, and Arg156 together coordinate DNA. The FPG-type zinc finger occupies 241–275; it reads FVYDRAGLPCRVCGTPIRQIVQGQRSTYFCPTCQR. Residue Arg265 is the Proton donor; for delta-elimination activity of the active site.

This sequence belongs to the FPG family. As to quaternary structure, monomer. It depends on Zn(2+) as a cofactor.

The catalysed reaction is Hydrolysis of DNA containing ring-opened 7-methylguanine residues, releasing 2,6-diamino-4-hydroxy-5-(N-methyl)formamidopyrimidine.. It catalyses the reaction 2'-deoxyribonucleotide-(2'-deoxyribose 5'-phosphate)-2'-deoxyribonucleotide-DNA = a 3'-end 2'-deoxyribonucleotide-(2,3-dehydro-2,3-deoxyribose 5'-phosphate)-DNA + a 5'-end 5'-phospho-2'-deoxyribonucleoside-DNA + H(+). Functionally, involved in base excision repair of DNA damaged by oxidation or by mutagenic agents. Acts as a DNA glycosylase that recognizes and removes damaged bases. Has a preference for oxidized purines, such as 7,8-dihydro-8-oxoguanine (8-oxoG). Has AP (apurinic/apyrimidinic) lyase activity and introduces nicks in the DNA strand. Cleaves the DNA backbone by beta-delta elimination to generate a single-strand break at the site of the removed base with both 3'- and 5'-phosphates. In Burkholderia ambifaria (strain MC40-6), this protein is Formamidopyrimidine-DNA glycosylase.